A 364-amino-acid polypeptide reads, in one-letter code: Alpha-2-HS-glycoprotein (364 aa).

Residues 1 to 15 constitute a signal peptide (or 17); the sequence is MKSFLLLFCLAQLCS. The 107-residue stretch at 27–133 folds into the Cystatin fetuin-A-type 1 domain; it reads YKEPACDDPD…QFSVLFTKCD (107 aa). Cystine bridges form between Cys-32/Cys-355, Cys-89/Cys-100, Cys-114/Cys-132, Cys-146/Cys-149, Cys-208/Cys-219, and Cys-230/Cys-248. Residue Asn-99 is glycosylated (N-linked (GlcNAc...) asparagine). Residues Ser-134, Ser-135, and Ser-138 each carry the phosphoserine modification. The Cystatin fetuin-A-type 2 domain occupies 144–256; the sequence is KLCPDCPLLA…TCTLFQTQPV (113 aa). N-linked (GlcNAc...) asparagine glycans are attached at residues Asn-156 and Asn-176. A glycan (O-linked (GalNAc...) serine) is linked at Ser-301. Thr-319 carries the phosphothreonine modification. Phosphoserine is present on residues Ser-321, Ser-325, Ser-328, and Ser-330. Thr-339 is a glycosylation site (O-linked (GalNAc...) threonine).

This sequence belongs to the fetuin family. In terms of processing, phosphorylated by FAM20C in the extracellular medium.

It localises to the secreted. The sequence is that of Alpha-2-HS-glycoprotein (AHSG) from Ovis aries (Sheep).